Reading from the N-terminus, the 297-residue chain is 3-mercaptopyruvate sulfurtransferase (297 aa).

The residue at position 2 (Ala2) is an N-acetylalanine. Residues 25 to 144 (SSQPLKLLDA…WLNQNLPISS (120 aa)) enclose the Rhodanese 1 domain. At Ser35 the chain carries Phosphoserine. Lys40 bears the N6-acetyllysine; alternate mark. At Lys40 the chain carries N6-succinyllysine; alternate. The tract at residues 145-160 (GKSHSEPAEFSAQLDP) is hinge. N6-succinyllysine occurs at positions 146 and 164. A Rhodanese 2 domain is found at 174–288 (DARRFQVVDA…WYMRAQPEHI (115 aa)). Arg188 contacts substrate. Cys248 functions as the Cysteine persulfide intermediate in the catalytic mechanism.

Monomer (active form). Homodimer; disulfide-linked (inactive form). In terms of tissue distribution, expressed in the brain and retina. In the retina, localized to the inner and outer plexiform layer, the inner and outer nuclear layer and the outer segments of photoreceptors. In the brain, localized to neurons of mitral cell layers, glomerular, and external plexiform layers in the olfactory bulb. Also found in Purkinje cell stomata and proximal dendrites. In the spinal cord, localized to large neurons. In the cerebral cortex, localized to pyramidial neurons in layers II/III and V, and in layers I-VI of neocortical areas. In the hippocampus, found in CA1 and CA3 pyramidal cells.

The protein resides in the cytoplasm. It localises to the mitochondrion. Its subcellular location is the synapse. The protein localises to the synaptosome. It carries out the reaction 2-oxo-3-sulfanylpropanoate + [thioredoxin]-dithiol = [thioredoxin]-disulfide + hydrogen sulfide + pyruvate + H(+). With respect to regulation, by oxidative stress, and thioredoxin. Under oxidative stress conditions, the catalytic cysteine site is converted to a sulfenate which inhibits the MPST enzyme activity. Reduced thioredoxin cleaves an intersubunit disulfide bond to turn on the redox switch and reactivate the enzyme. Inhibited by different oxidants, hydrogen peroxide and tetrathionate. Its function is as follows. Transfer of a sulfur ion to cyanide or to other thiol compounds. Also has weak rhodanese activity. Detoxifies cyanide and is required for thiosulfate biosynthesis. Acts as an antioxidant. In combination with cysteine aminotransferase (CAT), contributes to the catabolism of cysteine and is an important producer of hydrogen sulfide in the brain, retina and vascular endothelial cells. Hydrogen sulfide H(2)S is an important synaptic modulator, signaling molecule, smooth muscle contractor and neuroprotectant. Its production by the 3MST/CAT pathway is regulated by calcium ions. This chain is 3-mercaptopyruvate sulfurtransferase (Mpst), found in Mus musculus (Mouse).